The primary structure comprises 342 residues: MHHHHHPCNRKPFTTIFSFFLLYLNLHNQQIIEARNPSQFTTNPSPDVSIPEIKRHLQQYGYLPQNKESDDVSFEQALVRYQKNLGLPITGKPDSDTLSQILLPRCGFPDDVEPKTAPFHTGKKYVYFPGRPRWTRDVPLKLTYAFSQENLTPYLAPTDIRRVFRRAFGKWASVIPVSFIETEDYVIADIKIGFFNGDHGDGEPFDGVLGVLAHTFSPENGRLHLDKAETWAVDFDEEKSSVAVDLESVAVHEIGHVLGLGHSSVKDAAMYPTLKPRSKKVNLNMDDVVGVQSLYGTNPNFTLNSLLASETSTNLADGSRIRSQGMIYSTLSTVIALCFLNW.

Positions 1 to 34 are cleaved as a signal peptide; sequence MHHHHHPCNRKPFTTIFSFFLLYLNLHNQQIIEA. A propeptide spans 35–124 (activation peptide); it reads RNPSQFTTNP…KTAPFHTGKK (90 aa). The Cysteine switch motif lies at 104-111; it reads PRCGFPDD. 2 residues coordinate Zn(2+): Cys-106 and His-252. The active site involves Glu-253. The Zn(2+) site is built by His-256 and His-262. An N-linked (GlcNAc...) asparagine glycan is attached at Asn-300. Residue Asp-317 is the site of GPI-anchor amidated aspartate attachment. Residues 318 to 342 constitute a propeptide, removed in mature form; the sequence is GSRIRSQGMIYSTLSTVIALCFLNW.

This sequence belongs to the peptidase M10A family. Matrix metalloproteinases (MMPs) subfamily. It depends on Zn(2+) as a cofactor. Mostly expressed in flowers and stems, and, to a lower extent, in leaves and roots.

It is found in the cell membrane. Its activity is regulated as follows. Repressed by acetohydroxamic acid (AHA). Matrix metalloproteinases (MMPs) or matrixins may play a role in the degradation and remodeling of the extracellular matrix (ECM) during development or in response to stresses. Active on myelin basic protein (MBP) and, to some extent, on McaPLGLDpaAR-NH(2) (QF24) and beta-casein. In Arabidopsis thaliana (Mouse-ear cress), this protein is Metalloendoproteinase 4-MMP.